The following is a 216-amino-acid chain: Orotate phosphoribosyltransferase (216 aa).

Lys30 contributes to the 5-phospho-alpha-D-ribose 1-diphosphate binding site. 38-39 (FF) is a binding site for orotate. 5-phospho-alpha-D-ribose 1-diphosphate-binding positions include 75–76 (YK), Arg102, Lys103, Lys106, His108, and 128–136 (DDVITAGTA). Positions 132 and 160 each coordinate orotate.

This sequence belongs to the purine/pyrimidine phosphoribosyltransferase family. PyrE subfamily. As to quaternary structure, homodimer. Mg(2+) is required as a cofactor.

The catalysed reaction is orotidine 5'-phosphate + diphosphate = orotate + 5-phospho-alpha-D-ribose 1-diphosphate. Its pathway is pyrimidine metabolism; UMP biosynthesis via de novo pathway; UMP from orotate: step 1/2. Functionally, catalyzes the transfer of a ribosyl phosphate group from 5-phosphoribose 1-diphosphate to orotate, leading to the formation of orotidine monophosphate (OMP). This is Orotate phosphoribosyltransferase from Acinetobacter baumannii (strain ATCC 17978 / DSM 105126 / CIP 53.77 / LMG 1025 / NCDC KC755 / 5377).